The primary structure comprises 235 residues: tRNA pseudouridine synthase B (235 aa).

The active-site Nucleophile is aspartate 45.

It belongs to the pseudouridine synthase TruB family. Type 1 subfamily.

It carries out the reaction uridine(55) in tRNA = pseudouridine(55) in tRNA. Its function is as follows. Responsible for synthesis of pseudouridine from uracil-55 in the psi GC loop of transfer RNAs. This is tRNA pseudouridine synthase B from Chlamydia pneumoniae (Chlamydophila pneumoniae).